We begin with the raw amino-acid sequence, 400 residues long: Nicotinate phosphoribosyltransferase (400 aa).

The residue at position 220 (H220) is a Phosphohistidine; by autocatalysis.

The protein belongs to the NAPRTase family. Transiently phosphorylated on a His residue during the reaction cycle. Phosphorylation strongly increases the affinity for substrates and increases the rate of nicotinate D-ribonucleotide production. Dephosphorylation regenerates the low-affinity form of the enzyme, leading to product release.

The enzyme catalyses nicotinate + 5-phospho-alpha-D-ribose 1-diphosphate + ATP + H2O = nicotinate beta-D-ribonucleotide + ADP + phosphate + diphosphate. Its pathway is cofactor biosynthesis; NAD(+) biosynthesis; nicotinate D-ribonucleotide from nicotinate: step 1/1. Catalyzes the synthesis of beta-nicotinate D-ribonucleotide from nicotinate and 5-phospho-D-ribose 1-phosphate at the expense of ATP. This chain is Nicotinate phosphoribosyltransferase, found in Escherichia coli O157:H7.